Consider the following 238-residue polypeptide: Large ribosomal subunit protein uL2 (238 aa).

The disordered stretch occupies residues Ala-197–Trp-219.

Belongs to the universal ribosomal protein uL2 family. As to quaternary structure, part of the 50S ribosomal subunit. Forms a bridge to the 30S subunit in the 70S ribosome.

One of the primary rRNA binding proteins. Required for association of the 30S and 50S subunits to form the 70S ribosome, for tRNA binding and peptide bond formation. It has been suggested to have peptidyltransferase activity; this is somewhat controversial. Makes several contacts with the 16S rRNA in the 70S ribosome. The polypeptide is Large ribosomal subunit protein uL2 (Nanoarchaeum equitans (strain Kin4-M)).